The following is a 215-amino-acid chain: Ectodysplasin-A receptor-associated adapter protein (215 aa).

2 disordered regions span residues 1–41 and 62–86; these read MGLR…FNMS and LNCPRNSDMKNQGEENGFPDSTGDP. The segment covering 17-28 has biased composition (basic and acidic residues); that stretch reads GHQEDHMVKEPV. The Death domain occupies 123-202; it reads DVIRIKLDPC…KVLRRWVDEE (80 aa).

In terms of assembly, self-associates and binds EDAR, TRAF1, TRAF2 and TRAF3. Detected in adult pancreas, placenta and fetal skin, and at lower levels in lung, thymus, prostate and testis.

Its subcellular location is the cytoplasm. Adapter protein that interacts with EDAR DEATH domain and couples the receptor to EDA signaling pathway during morphogenesis of ectodermal organs. Mediates the activation of NF-kappa-B. The polypeptide is Ectodysplasin-A receptor-associated adapter protein (EDARADD) (Homo sapiens (Human)).